The primary structure comprises 301 residues: Bifunctional dTDP-4-dehydrorhamnose 3,5-epimerase/dTDP-4-dehydrorhamnose reductase (301 aa).

NADPH-binding positions include 23–24 (WI), 69–71 (GVT), and tyrosine 111.

It belongs to the dTDP-4-dehydrorhamnose reductase family. Expressed in roots, leaves, stems and flowers.

It carries out the reaction dTDP-4-dehydro-6-deoxy-alpha-D-glucose = dTDP-4-dehydro-beta-L-rhamnose. It catalyses the reaction dTDP-beta-L-rhamnose + NADP(+) = dTDP-4-dehydro-beta-L-rhamnose + NADPH + H(+). The protein operates within carbohydrate biosynthesis; dTDP-L-rhamnose biosynthesis. In terms of biological role, bifunctional enzyme involved in dTDP-beta-L-rhamnose biosynthesis. Catalyzes the epimerization of the C3' and C5'positions of dTDP-6-deoxy-4-keto-alpha-D-glucose to form dTDP-4-keto-beta-L-rhamnose and its reduction to yield dTDP-beta-L-rhamnose. Can form UDP-beta-L-rhamnose from UDP-6-deoxy-4-keto-alpha-D-glucose, but cannot convert GDP-4-dehydro-6-deoxy-D-mannose to GDP-fucose. The protein is Bifunctional dTDP-4-dehydrorhamnose 3,5-epimerase/dTDP-4-dehydrorhamnose reductase of Arabidopsis thaliana (Mouse-ear cress).